We begin with the raw amino-acid sequence, 317 residues long: Melanocyte-stimulating hormone receptor (317 aa).

Topologically, residues 1 to 37 (MAVQGSQRRLLGSLNSTPTAIPQLGLAANQTGAWCLE) are extracellular. An N-linked (GlcNAc...) asparagine glycan is attached at asparagine 29. The helical transmembrane segment at 38 to 63 (VSIPDGLFLSLGLVSLVENVLVVATI) threads the bilayer. Over 64-72 (AKNRNLHSP) the chain is Cytoplasmic. Residues 73-93 (MYCFICCLALSDLLVSGGNVL) traverse the membrane as a helical segment. At 94 to 118 (ETAVILLLEAGALAARAAVVQQLDN) the chain is on the extracellular side. The chain crosses the membrane as a helical span at residues 119 to 140 (VIDVITCSSMLSSLCFLGAIAV). Topologically, residues 141–163 (DRYISIFYALRYHSIVTLPRARR) are cytoplasmic. A helical membrane pass occupies residues 164–183 (AIAAIWVASVLFSTLFIAYY). Residues 184–191 (DHAAVLLC) are Extracellular-facing. The chain crosses the membrane as a helical span at residues 192 to 211 (LVVFFLAMLVLMAVLYVHML). The Cytoplasmic segment spans residues 212-240 (ARACQHAQGIARLHKRQRPVHQGFGLKGA). Residues 241-266 (VTLTILLGIFFLCWGPFFLHLTLIVL) form a helical membrane-spanning segment. Residues 267 to 279 (CPQHPTCSCIFKN) lie on the Extracellular side of the membrane. Residues 280–300 (FNLFLALIICNAIIDPLIYAF) traverse the membrane as a helical segment. Over 301–317 (RSQELRRTLKEVLTCSW) the chain is Cytoplasmic. Residue cysteine 315 is the site of S-palmitoyl cysteine attachment.

This sequence belongs to the G-protein coupled receptor 1 family. Interacts with MGRN1, but does not undergo MGRN1-mediated ubiquitination; this interaction competes with GNAS-binding and thus inhibits agonist-induced cAMP production. Interacts with OPN3; the interaction results in a decrease in MC1R-mediated cAMP signaling and ultimately a decrease in melanin production in melanocytes.

The protein localises to the cell membrane. In terms of biological role, receptor for MSH (alpha, beta and gamma) and ACTH. The activity of this receptor is mediated by G proteins which activate adenylate cyclase. Mediates melanogenesis, the production of eumelanin (black/brown) and phaeomelanin (red/yellow), via regulation of cAMP signaling in melanocytes. The chain is Melanocyte-stimulating hormone receptor (MC1R) from Pongo pygmaeus (Bornean orangutan).